The following is a 151-amino-acid chain: Mini-ribonuclease 3 (151 aa).

The active site involves D30.

It belongs to the MrnC RNase family. Homodimer. Requires Mg(2+) as cofactor.

It localises to the cytoplasm. Its function is as follows. Involved in correct processing of both the 5' and 3' ends of 23S rRNA precursor. Processes 30S rRNA precursor transcript even in absence of ribonuclease 3 (Rnc); Rnc processes 30S rRNA into smaller rRNA precursors. In Thermosynechococcus vestitus (strain NIES-2133 / IAM M-273 / BP-1), this protein is Mini-ribonuclease 3.